We begin with the raw amino-acid sequence, 212 residues long: Interleukin-6 (212 aa).

The first 27 residues, 1-27, serve as a signal peptide directing secretion; that stretch reads MNSFSTSAFGPVAFSLGLLLVLPAAFP. A disulfide bond links cysteine 72 and cysteine 78. The N-linked (GlcNAc...) asparagine glycan is linked to asparagine 73. Serine 81 bears the Phosphoserine mark. Cysteine 101 and cysteine 111 form a disulfide bridge. Asparagine 172 is a glycosylation site (N-linked (GlcNAc...) asparagine).

It belongs to the IL-6 superfamily. As to quaternary structure, component of a hexamer of two molecules each of IL6, IL6R and IL6ST; first binds to IL6R to associate with the signaling subunit IL6ST. Interacts with IL6R (via the N-terminal ectodomain); this interaction may be affected by IL6R-binding with SORL1, hence decreasing IL6 cis signaling. Interacts with SORL1 (via the N-terminal ectodomain); this interaction leads to IL6 internalization and lysosomal degradation. May form a trimeric complex with the soluble SORL1 ectodomain and soluble IL6R receptor; this interaction might stabilize circulating IL6, hence promoting IL6 trans signaling.

The protein localises to the secreted. In terms of biological role, cytokine with a wide variety of biological functions in immunity, tissue regeneration, and metabolism. Binds to IL6R, then the complex associates to the signaling subunit IL6ST/gp130 to trigger the intracellular IL6-signaling pathway. The interaction with the membrane-bound IL6R and IL6ST stimulates 'classic signaling', whereas the binding of IL6 and soluble IL6R to IL6ST stimulates 'trans-signaling'. Alternatively, 'cluster signaling' occurs when membrane-bound IL6:IL6R complexes on transmitter cells activate IL6ST receptors on neighboring receiver cells. IL6 is a potent inducer of the acute phase response. Rapid production of IL6 contributes to host defense during infection and tissue injury, but excessive IL6 synthesis is involved in disease pathology. In the innate immune response, is synthesized by myeloid cells, such as macrophages and dendritic cells, upon recognition of pathogens through toll-like receptors (TLRs) at the site of infection or tissue injury. In the adaptive immune response, is required for the differentiation of B cells into immunoglobulin-secreting cells. Plays a major role in the differentiation of CD4(+) T cell subsets. Essential factor for the development of T follicular helper (Tfh) cells that are required for the induction of germinal-center formation. Required to drive naive CD4(+) T cells to the Th17 lineage. Also required for proliferation of myeloma cells and the survival of plasmablast cells. Functionally, acts as an essential factor in bone homeostasis and on vessels directly or indirectly by induction of VEGF, resulting in increased angiogenesis activity and vascular permeability. Induces, through 'trans-signaling' and synergistically with IL1B and TNF, the production of VEGF. Involved in metabolic controls, is discharged into the bloodstream after muscle contraction increasing lipolysis and improving insulin resistance. 'Trans-signaling' in central nervous system also regulates energy and glucose homeostasis. Mediates, through GLP-1, crosstalk between insulin-sensitive tissues, intestinal L cells and pancreatic islets to adapt to changes in insulin demand. Also acts as a myokine. Plays a protective role during liver injury, being required for maintenance of tissue regeneration. Also has a pivotal role in iron metabolism by regulating HAMP/hepcidin expression upon inflammation or bacterial infection. Through activation of IL6ST-YAP-NOTCH pathway, induces inflammation-induced epithelial regeneration. The protein is Interleukin-6 (IL6) of Macaca mulatta (Rhesus macaque).